Consider the following 229-residue polypeptide: Auxin-responsive protein IAA17 (229 aa).

Residues 14–18 (LCLGL) carry the EAR-like (transcriptional repression) motif. The PB1 domain occupies 110–211 (AAFVKVSMDG…TCKRLRLMKG (102 aa)).

It belongs to the Aux/IAA family. As to quaternary structure, homodimers and heterodimers. Interacts with the auxin response factors ARF1 and IAA24. Interacts with IAA1. Interacts with TPL. Interacts (via PB1 domain) with ARF7 (via PB1 domain). In terms of processing, phosphorylated by phytochrome A in vitro.

It is found in the nucleus. In terms of biological role, aux/IAA proteins are short-lived transcriptional factors that function as repressors of early auxin response genes at low auxin concentrations. Repression is thought to result from the interaction with auxin response factors (ARFs), proteins that bind to the auxin-responsive promoter element (AuxRE). Formation of heterodimers with ARF proteins may alter their ability to modulate early auxin response genes expression. The protein is Auxin-responsive protein IAA17 (IAA17) of Arabidopsis thaliana (Mouse-ear cress).